The primary structure comprises 100 residues: uncharacterized protein (100 aa).

A coiled-coil region spans residues 65 to 96; it reads PELSKNWEKLKKEIEQKHKEIQELISEFDNMF.

This is an uncharacterized protein from Acidianus filamentous virus 2 (isolate Italy/Pozzuoli) (AFV-2).